Here is a 389-residue protein sequence, read N- to C-terminus: Phospho-N-acetylmuramoyl-pentapeptide-transferase (389 aa).

Transmembrane regions (helical) follow at residues 25–45 (RAVM…PWVI), 73–93 (TMGG…WGDL), 97–117 (FIWI…VDDY), 135–155 (FWQS…VSEA), 190–210 (ISYP…IVGA), 222–242 (GLVI…AYVM), 258–278 (GAGE…AFLW), 286–306 (VFMG…VAVI), 311–331 (IVLF…MLQV), and 366–386 (QVVV…LSTL).

This sequence belongs to the glycosyltransferase 4 family. MraY subfamily. The cofactor is Mg(2+).

It localises to the cell inner membrane. The catalysed reaction is UDP-N-acetyl-alpha-D-muramoyl-L-alanyl-gamma-D-glutamyl-meso-2,6-diaminopimeloyl-D-alanyl-D-alanine + di-trans,octa-cis-undecaprenyl phosphate = di-trans,octa-cis-undecaprenyl diphospho-N-acetyl-alpha-D-muramoyl-L-alanyl-D-glutamyl-meso-2,6-diaminopimeloyl-D-alanyl-D-alanine + UMP. Its pathway is cell wall biogenesis; peptidoglycan biosynthesis. Functionally, catalyzes the initial step of the lipid cycle reactions in the biosynthesis of the cell wall peptidoglycan: transfers peptidoglycan precursor phospho-MurNAc-pentapeptide from UDP-MurNAc-pentapeptide onto the lipid carrier undecaprenyl phosphate, yielding undecaprenyl-pyrophosphoryl-MurNAc-pentapeptide, known as lipid I. The chain is Phospho-N-acetylmuramoyl-pentapeptide-transferase from Burkholderia ambifaria (strain ATCC BAA-244 / DSM 16087 / CCUG 44356 / LMG 19182 / AMMD) (Burkholderia cepacia (strain AMMD)).